A 198-amino-acid chain; its full sequence is V-type ATP synthase subunit E (198 aa).

Belongs to the V-ATPase E subunit family.

Functionally, produces ATP from ADP in the presence of a proton gradient across the membrane. The protein is V-type ATP synthase subunit E of Clostridium perfringens (strain SM101 / Type A).